The sequence spans 267 residues: Phosphate import ATP-binding protein PstB 2 (267 aa).

Residues 21–262 (LTTKDLHVYY…AKCQSTSDYV (242 aa)) form the ABC transporter domain. 53–60 (GPSGCGKS) contacts ATP.

The protein belongs to the ABC transporter superfamily. Phosphate importer (TC 3.A.1.7) family. In terms of assembly, the complex is composed of two ATP-binding proteins (PstB), two transmembrane proteins (PstC and PstA) and a solute-binding protein (PstS).

The protein resides in the cell membrane. The enzyme catalyses phosphate(out) + ATP + H2O = ADP + 2 phosphate(in) + H(+). Part of the ABC transporter complex PstSACB involved in phosphate import. Responsible for energy coupling to the transport system. This Streptococcus agalactiae serotype Ia (strain ATCC 27591 / A909 / CDC SS700) protein is Phosphate import ATP-binding protein PstB 2.